The chain runs to 358 residues: Protein ttm-2 (358 aa).

This sequence belongs to the arrestin family.

Its function is as follows. Involved in resistance to B.thuringiensis pore-forming toxin Cry5B downstream of the sek-1 and pmk-1 MAPK kinase pathway. This is Protein ttm-2 from Caenorhabditis elegans.